A 189-amino-acid polypeptide reads, in one-letter code: UPF0301 protein PSEEN5058 (189 aa).

It belongs to the UPF0301 (AlgH) family.

This Pseudomonas entomophila (strain L48) protein is UPF0301 protein PSEEN5058.